The primary structure comprises 426 residues: UPF0597 protein CLI_1810 (426 aa).

This sequence belongs to the UPF0597 family.

This is UPF0597 protein CLI_1810 from Clostridium botulinum (strain Langeland / NCTC 10281 / Type F).